An 86-amino-acid polypeptide reads, in one-letter code: MeuNaTxbeta-1 (86 aa).

An N-terminal signal peptide occupies residues 1–20; sequence MMKIIIFLIVSSLVLIGVKT. One can recognise an LCN-type CS-alpha/beta domain in the interval 21-83; it reads DNGYLLDKYT…LWHYETNKCN (63 aa). Intrachain disulfides connect Cys32-Cys82, Cys36-Cys57, Cys43-Cys64, and Cys47-Cys66.

In terms of tissue distribution, expressed by the venom gland.

The protein localises to the secreted. In terms of biological role, inhibits sodium channels (Nav). Also moderately inhibits human calcium-activated potassium channel KCa1.1/KCNMA1/BK (41.9% decrease at 2 uM toxin concentration). Shows moderate antimicrobial activity against both Gram-positive and -negative bacteria. In Mesobuthus eupeus (Lesser Asian scorpion), this protein is MeuNaTxbeta-1.